A 175-amino-acid polypeptide reads, in one-letter code: Putative lipoprotein LppN (175 aa).

The N-terminal stretch at 1-20 (MRLPGRHVLYALSAVTMLAA) is a signal peptide. The N-palmitoyl cysteine moiety is linked to residue C21. A lipid anchor (S-diacylglycerol cysteine) is attached at C21. The tract at residues 31-56 (ASTNMNPTNPPATAETATVSPTPAPQ) is disordered. Low complexity predominate over residues 33-48 (TNMNPTNPPATAETAT).

Its subcellular location is the cell membrane. This Mycobacterium bovis (strain ATCC BAA-935 / AF2122/97) protein is Putative lipoprotein LppN (lppN).